The primary structure comprises 225 residues: Phosphoserine phosphatase (225 aa).

Position 1 is an N-acetylmethionine (Met-1). Catalysis depends on Asp-20, which acts as the Nucleophile. Residues Asp-20 and Asp-22 each contribute to the Mg(2+) site. Residue 20–22 coordinates L-serine; the sequence is DVD. Asp-22 functions as the Proton donor in the catalytic mechanism. Met-52 contacts O-phospho-L-serine. Phosphate is bound at residue Gly-53. L-serine-binding positions include 109–111 and Lys-158; that span reads SGG. O-phospho-L-serine-binding positions include 109–111 and Lys-158; that span reads SGG. Asp-179 contacts Mg(2+). Thr-182 lines the O-phospho-L-serine pocket. Thr-182 contacts phosphate.

Belongs to the HAD-like hydrolase superfamily. SerB family. Homodimer. Mg(2+) is required as a cofactor.

It is found in the cytoplasm. Its subcellular location is the cytosol. The catalysed reaction is O-phospho-L-serine + H2O = L-serine + phosphate. It catalyses the reaction O-phospho-D-serine + H2O = D-serine + phosphate. It participates in amino-acid biosynthesis; L-serine biosynthesis; L-serine from 3-phospho-D-glycerate: step 3/3. Its function is as follows. Catalyzes the last irreversible step in the biosynthesis of L-serine from carbohydrates, the dephosphorylation of O-phospho-L-serine to L-serine. L-serine can then be used in protein synthesis, to produce other amino acids, in nucleotide metabolism or in glutathione synthesis, or can be racemized to D-serine, a neuromodulator. May also act on O-phospho-D-serine. The polypeptide is Phosphoserine phosphatase (Rattus norvegicus (Rat)).